The sequence spans 359 residues: Biotin synthase (359 aa).

Residues histidine 47 to arginine 276 form the Radical SAM core domain. Positions 65, 69, and 72 each coordinate [4Fe-4S] cluster. Cysteine 109, cysteine 141, cysteine 201, and arginine 271 together coordinate [2Fe-2S] cluster. A disordered region spans residues glutamate 320 to glycine 359.

This sequence belongs to the radical SAM superfamily. Biotin synthase family. Homodimer. It depends on [4Fe-4S] cluster as a cofactor. Requires [2Fe-2S] cluster as cofactor.

It carries out the reaction (4R,5S)-dethiobiotin + (sulfur carrier)-SH + 2 reduced [2Fe-2S]-[ferredoxin] + 2 S-adenosyl-L-methionine = (sulfur carrier)-H + biotin + 2 5'-deoxyadenosine + 2 L-methionine + 2 oxidized [2Fe-2S]-[ferredoxin]. Its pathway is cofactor biosynthesis; biotin biosynthesis; biotin from 7,8-diaminononanoate: step 2/2. Its function is as follows. Catalyzes the conversion of dethiobiotin (DTB) to biotin by the insertion of a sulfur atom into dethiobiotin via a radical-based mechanism. The sequence is that of Biotin synthase from Salinibacter ruber (strain DSM 13855 / M31).